A 255-amino-acid chain; its full sequence is Major prion protein (255 aa).

The signal sequence occupies residues 1–24; sequence MVKSHIGSWILVLFVAMWSDVGLC. Residues 25–41 are interaction with ADGRG6; it reads KKRPKPGGGWNTGGSRY. The segment at 25-232 is interaction with GRB2, ERI3 and SYN1; that stretch reads KKRPKPGGGW…ESEAYYQRGA (208 aa). A disordered region spans residues 28–110; that stretch reads PKPGGGWNTG…QWNKPSKPKT (83 aa). Repeat copies occupy residues 54 to 62, 63 to 70, 71 to 78, 79 to 86, and 87 to 94. The interval 54–94 is 5 X 8 AA tandem repeats of P-H-G-G-G-W-G-Q; sequence PQGGGGWGQPHGGGWGQPHGGGWGQPHGGGWGQPHGGGGWG. Residues 55–97 are compositionally biased toward gly residues; sequence QGGGGWGQPHGGGWGQPHGGGWGQPHGGGWGQPHGGGGWGQGG. Cu(2+)-binding residues include His64, Gly65, Gly66, His72, Gly73, Gly74, His80, Gly81, Gly82, His88, Gly90, and Gly91. 3 N-linked (GlcNAc...) asparagine glycosylation sites follow: Asn174, Asn184, and Asn199. A disulfide bridge links Cys182 with Cys216. Ala232 carries the GPI-anchor amidated alanine lipid modification. The propeptide at 233–255 is removed in mature form; the sequence is SVILFSSPPVILLVSFLIFLIVG.

Belongs to the prion family. Monomer and homodimer. Has a tendency to aggregate into amyloid fibrils containing a cross-beta spine, formed by a steric zipper of superposed beta-strands. Soluble oligomers may represent an intermediate stage on the path to fibril formation. Copper binding may promote oligomerization. Interacts with GRB2, APP, ERI3/PRNPIP and SYN1. Mislocalized cytosolically exposed PrP interacts with MGRN1; this interaction alters MGRN1 subcellular location and causes lysosomal enlargement. Interacts with APP. Interacts with KIAA1191. Interacts with ADGRG6.

The protein localises to the cell membrane. Its subcellular location is the golgi apparatus. Its primary physiological function is unclear. May play a role in neuronal development and synaptic plasticity. May be required for neuronal myelin sheath maintenance. May promote myelin homeostasis through acting as an agonist for ADGRG6 receptor. May play a role in iron uptake and iron homeostasis. Soluble oligomers are toxic to cultured neuroblastoma cells and induce apoptosis (in vitro). Association with GPC1 (via its heparan sulfate chains) targets PRNP to lipid rafts. Also provides Cu(2+) or Zn(2+) for the ascorbate-mediated GPC1 deaminase degradation of its heparan sulfate side chains. In Canis lupus familiaris (Dog), this protein is Major prion protein (PRNP).